We begin with the raw amino-acid sequence, 345 residues long: NADH-quinone oxidoreductase subunit H (345 aa).

8 helical membrane passes run 14 to 34 (IILA…LFLV), 84 to 104 (FILA…VIPF), 115 to 135 (VAIL…IMGG), 161 to 181 (IGLI…GDIV), 187 to 207 (GWGF…LFFI), 248 to 268 (YIAI…GWLS), 277 to 297 (VLWM…VKAI), and 309 to 329 (LGWK…AFAA).

This sequence belongs to the complex I subunit 1 family. NDH-1 is composed of 14 different subunits. Subunits NuoA, H, J, K, L, M, N constitute the membrane sector of the complex.

It is found in the cell inner membrane. It catalyses the reaction a quinone + NADH + 5 H(+)(in) = a quinol + NAD(+) + 4 H(+)(out). In terms of biological role, NDH-1 shuttles electrons from NADH, via FMN and iron-sulfur (Fe-S) centers, to quinones in the respiratory chain. The immediate electron acceptor for the enzyme in this species is believed to be ubiquinone. Couples the redox reaction to proton translocation (for every two electrons transferred, four hydrogen ions are translocated across the cytoplasmic membrane), and thus conserves the redox energy in a proton gradient. This subunit may bind ubiquinone. This is NADH-quinone oxidoreductase subunit H from Ruegeria pomeroyi (strain ATCC 700808 / DSM 15171 / DSS-3) (Silicibacter pomeroyi).